A 105-amino-acid chain; its full sequence is Thiosulfate sulfurtransferase GlpE (105 aa).

A Rhodanese domain is found at 15 to 103 (MQQGAILVDI…WCRAELPIDT (89 aa)). The Cysteine persulfide intermediate role is filled by C63.

This sequence belongs to the GlpE family.

The protein localises to the cytoplasm. The enzyme catalyses thiosulfate + hydrogen cyanide = thiocyanate + sulfite + 2 H(+). It carries out the reaction thiosulfate + [thioredoxin]-dithiol = [thioredoxin]-disulfide + hydrogen sulfide + sulfite + 2 H(+). Its function is as follows. Transferase that catalyzes the transfer of sulfur from thiosulfate to thiophilic acceptors such as cyanide or dithiols. May function in a CysM-independent thiosulfate assimilation pathway by catalyzing the conversion of thiosulfate to sulfite, which can then be used for L-cysteine biosynthesis. The polypeptide is Thiosulfate sulfurtransferase GlpE (Haemophilus influenzae (strain 86-028NP)).